Here is a 418-residue protein sequence, read N- to C-terminus: Flavin-dependent L-tryptophan oxidase VioA (418 aa).

Gly13 provides a ligand contact to Mg(2+). Ser15 is an FAD binding site. Residue Gly16 participates in Mg(2+) binding. Positions 38, 46, and 64 each coordinate FAD. Positions 64 and 163 each coordinate substrate. Leu208 lines the FAD pocket. Mg(2+) is bound at residue Ala240. Residue Tyr309 participates in substrate binding. Met398 lines the FAD pocket.

It belongs to the flavin monoamine oxidase family. As to quaternary structure, homodimer. FAD serves as cofactor. Requires Mg(2+) as cofactor.

It carries out the reaction L-tryptophan + O2 = 2-iminio-3-(indol-3-yl)propanoate + H2O2. The catalysed reaction is 7-chloro-L-tryptophan + O2 = 3-(7-chloroindol-3-yl)-2-iminopropanoate + H2O2. The protein operates within pigment biosynthesis; violacein biosynthesis. In terms of biological role, the enzyme generates the imine form of indole 3-pyruvate (IPA) from L-tryptophan (L-Trp), with concomitant two-electron reduction of O(2) to H(2)O(2). This is Flavin-dependent L-tryptophan oxidase VioA (vioA) from Chromobacterium violaceum (strain ATCC 12472 / DSM 30191 / JCM 1249 / CCUG 213 / NBRC 12614 / NCIMB 9131 / NCTC 9757 / MK).